Consider the following 562-residue polypeptide: Endoglucanase E1 (562 aa).

An N-terminal signal peptide occupies residues 1–41; it reads MPRALRRVPGSRVMLRVGVVVAVLALVAALANLAVPRPARA. Positions 42 to 400 are catalytic; that stretch reads AGGGYWHTSG…IKSSIFDPVG (359 aa). Cysteines 75 and 161 form a disulfide. The active-site Proton donor is the Glu-203. Cys-209 and Cys-212 are joined by a disulfide. Glu-323 (nucleophile) is an active-site residue. Positions 399-462 are disordered; sequence VGASASPSSQ…PTPSPTAASG (64 aa). 2 stretches are compositionally biased toward low complexity: residues 401–411 and 437–449; these read ASASPSSQPSP and PTPT…TPTP. In terms of domain architecture, CBM2 spans 458-562; the sequence is TAASGARCTA…AAPTVACAAS (105 aa).

This sequence belongs to the glycosyl hydrolase 5 (cellulase A) family.

It carries out the reaction Endohydrolysis of (1-&gt;4)-beta-D-glucosidic linkages in cellulose, lichenin and cereal beta-D-glucans.. Functionally, has a very high specific activity on carboxymethylcellulose. The chain is Endoglucanase E1 from Acidothermus cellulolyticus (strain ATCC 43068 / DSM 8971 / 11B).